The sequence spans 130 residues: Glycine cleavage system H protein (130 aa).

Residues 25–106 (TALIGISDFA…PFDSWMIKVK (82 aa)) enclose the Lipoyl-binding domain. Lys66 bears the N6-lipoyllysine mark.

Belongs to the GcvH family. In terms of assembly, the glycine cleavage system is composed of four proteins: P, T, L and H. It depends on (R)-lipoate as a cofactor.

Its function is as follows. The glycine cleavage system catalyzes the degradation of glycine. The H protein shuttles the methylamine group of glycine from the P protein to the T protein. This chain is Glycine cleavage system H protein, found in Leptospira borgpetersenii serovar Hardjo-bovis (strain JB197).